The sequence spans 62 residues: Large ribosomal subunit protein bL28 (62 aa).

It belongs to the bacterial ribosomal protein bL28 family.

This chain is Large ribosomal subunit protein bL28, found in Caldanaerobacter subterraneus subsp. tengcongensis (strain DSM 15242 / JCM 11007 / NBRC 100824 / MB4) (Thermoanaerobacter tengcongensis).